The sequence spans 727 residues: Protein edg-1 (727 aa).

The disordered stretch occupies residues 703–727 (FAESSVKPTTSSAYGNSSNFSRYAD).

May interact with deps-1 and prg-1.

The protein localises to the cytoplasmic granule. In terms of biological role, plays a role in regulating deps-1 cluster formation in the germline. The protein is Protein edg-1 of Caenorhabditis elegans.